A 194-amino-acid chain; its full sequence is Segregation and condensation protein B (194 aa).

It belongs to the ScpB family. As to quaternary structure, homodimer. Homodimerization may be required to stabilize the binding of ScpA to the Smc head domains. Component of a cohesin-like complex composed of ScpA, ScpB and the Smc homodimer, in which ScpA and ScpB bind to the head domain of Smc. The presence of the three proteins is required for the association of the complex with DNA.

The protein resides in the cytoplasm. Participates in chromosomal partition during cell division. May act via the formation of a condensin-like complex containing Smc and ScpA that pull DNA away from mid-cell into both cell halves. The protein is Segregation and condensation protein B of Brevibacillus brevis (strain 47 / JCM 6285 / NBRC 100599).